We begin with the raw amino-acid sequence, 345 residues long: N-acetyl-gamma-glutamyl-phosphate reductase (345 aa).

The active site involves cysteine 151.

Belongs to the NAGSA dehydrogenase family. Type 1 subfamily.

It localises to the cytoplasm. It carries out the reaction N-acetyl-L-glutamate 5-semialdehyde + phosphate + NADP(+) = N-acetyl-L-glutamyl 5-phosphate + NADPH + H(+). Its pathway is amino-acid biosynthesis; L-arginine biosynthesis; N(2)-acetyl-L-ornithine from L-glutamate: step 3/4. Catalyzes the NADPH-dependent reduction of N-acetyl-5-glutamyl phosphate to yield N-acetyl-L-glutamate 5-semialdehyde. This is N-acetyl-gamma-glutamyl-phosphate reductase from Clostridium novyi (strain NT).